Reading from the N-terminus, the 233-residue chain is ATP-dependent dethiobiotin synthetase BioD (233 aa).

Residue 12-17 (EVGKTY) coordinates ATP. Thr-16 lines the Mg(2+) pocket. Residue Lys-37 is part of the active site. Residues Asp-54, 120–123 (EGAG), and 186–187 (ND) contribute to the ATP site. The Mg(2+) site is built by Asp-54 and Glu-120.

The protein belongs to the dethiobiotin synthetase family. As to quaternary structure, homodimer. Mg(2+) is required as a cofactor.

The protein resides in the cytoplasm. It carries out the reaction (7R,8S)-7,8-diammoniononanoate + CO2 + ATP = (4R,5S)-dethiobiotin + ADP + phosphate + 3 H(+). Its pathway is cofactor biosynthesis; biotin biosynthesis; biotin from 7,8-diaminononanoate: step 1/2. In terms of biological role, catalyzes a mechanistically unusual reaction, the ATP-dependent insertion of CO2 between the N7 and N8 nitrogen atoms of 7,8-diaminopelargonic acid (DAPA, also called 7,8-diammoniononanoate) to form a ureido ring. The chain is ATP-dependent dethiobiotin synthetase BioD from Alteromonas mediterranea (strain DSM 17117 / CIP 110805 / LMG 28347 / Deep ecotype).